A 310-amino-acid polypeptide reads, in one-letter code: DNA-directed RNA polymerase subunit alpha (310 aa).

Residues 1 to 230 (MLGKVNGVQI…KLFNPLRVLD (230 aa)) form an alpha N-terminal domain (alpha-NTD) region. Residues 242–310 (NSLIKQKLIE…YKKFGVKLKH (69 aa)) form an alpha C-terminal domain (alpha-CTD) region.

The protein belongs to the RNA polymerase alpha chain family. In plastids the minimal PEP RNA polymerase catalytic core is composed of four subunits: alpha, beta, beta', and beta''. When a (nuclear-encoded) sigma factor is associated with the core the holoenzyme is formed, which can initiate transcription.

Its subcellular location is the plastid. The protein resides in the chloroplast. The enzyme catalyses RNA(n) + a ribonucleoside 5'-triphosphate = RNA(n+1) + diphosphate. Functionally, DNA-dependent RNA polymerase catalyzes the transcription of DNA into RNA using the four ribonucleoside triphosphates as substrates. The protein is DNA-directed RNA polymerase subunit alpha of Cyanidium caldarium (Red alga).